A 211-amino-acid polypeptide reads, in one-letter code: Thymidylate kinase (211 aa).

11–18 (GPDGAGKT) contributes to the ATP binding site.

Belongs to the thymidylate kinase family.

It catalyses the reaction dTMP + ATP = dTDP + ADP. Phosphorylation of dTMP to form dTDP in both de novo and salvage pathways of dTTP synthesis. This chain is Thymidylate kinase, found in Streptococcus uberis (strain ATCC BAA-854 / 0140J).